The following is a 278-amino-acid chain: C-type lectin domain family 1 member A (278 aa).

The tract at residues 1 to 42 (MLAKYSSTRDMLDADGDTTMSLHSQASATSQRPELGHTEHQR) is disordered. Over 1-52 (MLAKYSSTRDMLDADGDTTMSLHSQASATSQRPELGHTEHQRPSSAWRPVAL) the chain is Cytoplasmic. Positions 18 to 32 (TTMSLHSQASATSQR) are enriched in polar residues. A helical; Signal-anchor for type II membrane protein membrane pass occupies residues 53-73 (ILLTLCLVLLIGLAALGLVFF). Residues 74 to 278 (QFYQLSNTQQ…LHEPLSRRWR (205 aa)) are Extracellular-facing. 2 N-linked (GlcNAc...) asparagine glycosylation sites follow: Asn95 and Asn169. A C-type lectin domain is found at 144 to 258 (HGDKCYQFYK…CRELRRCACE (115 aa)). 2 cysteine pairs are disulfide-bonded: Cys165/Cys257 and Cys236/Cys249.

It is found in the membrane. In Bos taurus (Bovine), this protein is C-type lectin domain family 1 member A (CLEC1A).